Here is a 229-residue protein sequence, read N- to C-terminus: Ribulose-phosphate 3-epimerase (229 aa).

Residue Ser-12 coordinates substrate. The a divalent metal cation site is built by His-37, Asp-39, and His-70. Asp-39 serves as the catalytic Proton acceptor. Residues His-70, 146–149, 181–183, and 203–204 each bind substrate; these read GFTG, DGG, and AS. Asp-181 is a binding site for a divalent metal cation. Residue Asp-181 is the Proton donor of the active site.

The protein belongs to the ribulose-phosphate 3-epimerase family. A divalent metal cation serves as cofactor.

The enzyme catalyses D-ribulose 5-phosphate = D-xylulose 5-phosphate. The protein operates within carbohydrate degradation. Its function is as follows. Catalyzes the reversible epimerization of D-ribulose 5-phosphate to D-xylulose 5-phosphate. This chain is Ribulose-phosphate 3-epimerase, found in Chlamydia pneumoniae (Chlamydophila pneumoniae).